A 43-amino-acid polypeptide reads, in one-letter code: Alpha-conotoxin-like Leo-A1 (43 aa).

Positions 1-26 are excised as a propeptide; it reads LTLDRASDDTDVAAEIMSGLIALAID. 2 disulfide bridges follow: cysteine 28–cysteine 34 and cysteine 29–cysteine 42. A lacks the Ser-Xaa-Pro motif that is crucial for potent interaction with nAChR region spans residues 30–32; the sequence is SDS.

It belongs to the conotoxin A superfamily. As to expression, expressed by the venom duct.

It localises to the secreted. Its function is as follows. Alpha-conotoxins act on postsynaptic membranes, they bind to the nicotinic acetylcholine receptors (nAChR) and thus inhibit them. Has possibly a distinct nAChR binding mode from other alpha-conotoxins, due to a different three residue motif (lacks the Ser-Xaa-Pro motif). The polypeptide is Alpha-conotoxin-like Leo-A1 (Conus leopardus (Leopard cone)).